The following is a 311-amino-acid chain: Transcriptional regulatory protein MoaR1 (311 aa).

Residues 15-117 (LNATTAGAVQ…SEPPGYRLLI (103 aa)) constitute a DNA-binding region (ompR/PhoB-type).

Belongs to the AfsR/DnrI/RedD regulatory family.

Acts as a positive transcriptional regulator of the molybdopterin biosynthesis moa1 locus, promoting the expression of the moaA1B1C1D1 genes. Binds directly to the moaA1 promoter. This Mycobacterium tuberculosis (strain ATCC 25618 / H37Rv) protein is Transcriptional regulatory protein MoaR1 (moaR1).